Reading from the N-terminus, the 309-residue chain is tRNA uridine(34) hydroxylase (309 aa).

The Rhodanese domain maps to 130–225; that stretch reads RGEEVVFFDG…YGEKYGNDGL (96 aa). The active-site Cysteine persulfide intermediate is cysteine 185.

This sequence belongs to the TrhO family.

The enzyme catalyses uridine(34) in tRNA + AH2 + O2 = 5-hydroxyuridine(34) in tRNA + A + H2O. Catalyzes oxygen-dependent 5-hydroxyuridine (ho5U) modification at position 34 in tRNAs. The protein is tRNA uridine(34) hydroxylase of Corynebacterium aurimucosum (strain ATCC 700975 / DSM 44827 / CIP 107346 / CN-1) (Corynebacterium nigricans).